The chain runs to 224 residues: uncharacterized protein (224 aa).

4 consecutive transmembrane segments (helical) span residues 25–45, 56–76, 107–127, and 149–169; these read ALAW…IYGI, VFLI…VILP, ELFL…YFFV, and IFVK…VVYF.

Its subcellular location is the cell membrane. This is an uncharacterized protein from Mycoplasma pneumoniae (strain ATCC 29342 / M129 / Subtype 1) (Mycoplasmoides pneumoniae).